The following is a 456-amino-acid chain: Antizyme inhibitor 2 (456 aa).

The active-site Proton donor; shared with dimeric partner is the Cys357.

It belongs to the Orn/Lys/Arg decarboxylase class-II family. ODC antizyme inhibitor subfamily. In terms of assembly, monomer. Interacts with OAZ1; this interaction disrupts the interaction between the antizyme and ODC1. Does not form a heterodimer with ODC1.

The protein localises to the nucleus. It is found in the cytoplasm. The protein resides in the perinuclear region. Its subcellular location is the membrane. It localises to the cytoplasmic vesicle. The protein localises to the endoplasmic reticulum-Golgi intermediate compartment. It is found in the golgi apparatus. The protein resides in the cis-Golgi network. Its subcellular location is the trans-Golgi network. It localises to the cytoplasmic granule. The protein localises to the cell projection. It is found in the axon. The protein resides in the dendrite. Its subcellular location is the perikaryon. Antizyme inhibitor (AZI) protein that positively regulates ornithine decarboxylase (ODC) activity and polyamine uptake. AZI is an enzymatically inactive ODC homolog that counteracts the negative effect of ODC antizyme (AZ) on ODC activity by competing with ODC for antizyme-binding. Inhibits antizyme-dependent ODC degradation and releases ODC monomers from their inactive complex with antizymes, leading to formation of the catalytically active ODC homodimer and restoring polyamine production. Participates in the morphological integrity of the trans-Golgi network (TGN) and functions as a regulator of intracellular secretory vesicle trafficking. The protein is Antizyme inhibitor 2 (azin2) of Xenopus laevis (African clawed frog).